A 712-amino-acid chain; its full sequence is Phosphomethylpyrimidine synthase (712 aa).

Positions 14–49 (AIDITAPESTIPNKSKVPNKSAESSQSTVPKAPSRR) are disordered. Positions 20–42 (PESTIPNKSKVPNKSAESSQSTV) are enriched in polar residues. Substrate-binding positions include Asn-283, Met-312, Tyr-341, His-377, 397 to 399 (SRG), 438 to 441 (DGMR), and Glu-477. His-481 serves as a coordination point for Zn(2+). Substrate is bound at residue Tyr-504. Position 545 (His-545) interacts with Zn(2+). [4Fe-4S] cluster-binding residues include Cys-625, Cys-628, and Cys-633.

Belongs to the ThiC family. In terms of assembly, homodimer. It depends on [4Fe-4S] cluster as a cofactor.

It carries out the reaction 5-amino-1-(5-phospho-beta-D-ribosyl)imidazole + S-adenosyl-L-methionine = 4-amino-2-methyl-5-(phosphooxymethyl)pyrimidine + CO + 5'-deoxyadenosine + formate + L-methionine + 3 H(+). Its pathway is cofactor biosynthesis; thiamine diphosphate biosynthesis. In terms of biological role, catalyzes the synthesis of the hydroxymethylpyrimidine phosphate (HMP-P) moiety of thiamine from aminoimidazole ribotide (AIR) in a radical S-adenosyl-L-methionine (SAM)-dependent reaction. This Shewanella putrefaciens (strain CN-32 / ATCC BAA-453) protein is Phosphomethylpyrimidine synthase.